The sequence spans 278 residues: Transmembrane protein 45B (278 aa).

7 consecutive transmembrane segments (helical) span residues 7–27, 49–69, 95–115, 117–137, 149–169, 183–203, and 215–235; these read HALPGSFFLIFGLWWSVKYPL, IIEGAVKALFAVIGILAEQFV, YLFFGVSGIIDMLTYLYFNIV, LGLDRVVLAMAVFVEGFLFYF, IHSLLLFSLFGATISICLEVI, LLILQGTWFWQIGFVLFPPFG, and VMFITMCFCWHYLVALCITAI. Residues serine 273 and serine 275 each carry the phosphoserine modification.

Belongs to the TMEM45 family.

Its subcellular location is the endosome membrane. The protein localises to the lysosome membrane. It localises to the golgi apparatus. It is found in the trans-Golgi network membrane. In terms of biological role, plays a role in innate immunity. This chain is Transmembrane protein 45B (Tmem45b), found in Rattus norvegicus (Rat).